Consider the following 490-residue polypeptide: UDP-glycosyltransferase 73C7 (490 aa).

UDP-alpha-D-glucose contacts are provided by residues serine 291, 351–353 (APQ), 368–376 (HCGWNSTLE), and 390–393 (FAEQ).

The protein belongs to the UDP-glycosyltransferase family.

This is UDP-glycosyltransferase 73C7 (UGT73C7) from Arabidopsis thaliana (Mouse-ear cress).